Here is a 399-residue protein sequence, read N- to C-terminus: Acetate kinase (399 aa).

Asparagine 7 contributes to the Mg(2+) binding site. Lysine 14 lines the ATP pocket. Arginine 90 lines the substrate pocket. Catalysis depends on aspartate 147, which acts as the Proton donor/acceptor. Residues histidine 207–glycine 211, aspartate 282–arginine 284, and glycine 330–asparagine 334 contribute to the ATP site. Glutamate 385 is a Mg(2+) binding site.

It belongs to the acetokinase family. Homodimer. The cofactor is Mg(2+). Mn(2+) is required as a cofactor.

The protein localises to the cytoplasm. The enzyme catalyses acetate + ATP = acetyl phosphate + ADP. The protein operates within metabolic intermediate biosynthesis; acetyl-CoA biosynthesis; acetyl-CoA from acetate: step 1/2. Functionally, catalyzes the formation of acetyl phosphate from acetate and ATP. Can also catalyze the reverse reaction. The polypeptide is Acetate kinase (Caldicellulosiruptor bescii (strain ATCC BAA-1888 / DSM 6725 / KCTC 15123 / Z-1320) (Anaerocellum thermophilum)).